The primary structure comprises 101 residues: NADH-quinone oxidoreductase subunit K (101 aa).

Transmembrane regions (helical) follow at residues 4–24 (LSHY…GIFI), 29–49 (IIVI…NLVA), and 65–85 (FVLT…VVFF).

It belongs to the complex I subunit 4L family. In terms of assembly, NDH-1 is composed of 14 different subunits. Subunits NuoA, H, J, K, L, M, N constitute the membrane sector of the complex.

It is found in the cell inner membrane. It catalyses the reaction a quinone + NADH + 5 H(+)(in) = a quinol + NAD(+) + 4 H(+)(out). NDH-1 shuttles electrons from NADH, via FMN and iron-sulfur (Fe-S) centers, to quinones in the respiratory chain. The immediate electron acceptor for the enzyme in this species is believed to be ubiquinone. Couples the redox reaction to proton translocation (for every two electrons transferred, four hydrogen ions are translocated across the cytoplasmic membrane), and thus conserves the redox energy in a proton gradient. This chain is NADH-quinone oxidoreductase subunit K, found in Methylobacterium nodulans (strain LMG 21967 / CNCM I-2342 / ORS 2060).